The chain runs to 244 residues: MSKLDLNALNELPKVDRILALAETNAELEKLDAEGRVAWALDNLPGEYVLSSSFGIQAAVSLHLVNQIHPDIPVILTDTGYLFPETYRFIDELTDKLKLNLKVYRATESAAWQEARYGKLWEQGVEGIEKYNDINKVEPMNRALKELNAQTWFAGLRREQSGSRANLPVLAIQRGVFKVLPIIDWDNRTIYQYLQKHGLKYHPLWDDGYLSVGDTHTTRKWEPGMAEEETRFFGLKRECGLHEG.

The Nucleophile; cysteine thiosulfonate intermediate role is filled by cysteine 239.

The protein belongs to the PAPS reductase family. CysH subfamily.

It localises to the cytoplasm. The enzyme catalyses [thioredoxin]-disulfide + sulfite + adenosine 3',5'-bisphosphate + 2 H(+) = [thioredoxin]-dithiol + 3'-phosphoadenylyl sulfate. Its pathway is sulfur metabolism; hydrogen sulfide biosynthesis; sulfite from sulfate: step 3/3. Functionally, catalyzes the formation of sulfite from phosphoadenosine 5'-phosphosulfate (PAPS) using thioredoxin as an electron donor. This is Phosphoadenosine 5'-phosphosulfate reductase from Shigella flexneri serotype 5b (strain 8401).